We begin with the raw amino-acid sequence, 273 residues long: Pantothenate synthetase (273 aa).

Position 27-34 (27-34) interacts with ATP; the sequence is MGALHDGH. Catalysis depends on His34, which acts as the Proton donor. Gln58 provides a ligand contact to (R)-pantoate. Gln58 is a binding site for beta-alanine. Residue 144–147 coordinates ATP; sequence GKKD. Residue Gln150 participates in (R)-pantoate binding. Residues Val173 and 181–184 each bind ATP; that span reads LSSR.

The protein belongs to the pantothenate synthetase family. As to quaternary structure, homodimer.

The protein resides in the cytoplasm. It catalyses the reaction (R)-pantoate + beta-alanine + ATP = (R)-pantothenate + AMP + diphosphate + H(+). Its pathway is cofactor biosynthesis; (R)-pantothenate biosynthesis; (R)-pantothenate from (R)-pantoate and beta-alanine: step 1/1. Catalyzes the condensation of pantoate with beta-alanine in an ATP-dependent reaction via a pantoyl-adenylate intermediate. This is Pantothenate synthetase from Campylobacter curvus (strain 525.92).